The chain runs to 383 residues: MKRKVLALVIPALLAAGAAHAAEIYNKDGNKLDLYGKVDGLHYFSDDSSKDGDQTYMRVGFKGETQINDQLTGYGQWEYNVQANTTEGEGANSWTRLAFAGLKFGDYGSFDYGRNYGVLYDVEGWTDMLPEFGGDSYTYADNYMTGRANGVATYRNTDFFGLVDGLNFALQYQGKNESQSADDVNIGTNNRNNGDDIRYDNGDGFGISTTYDIGMGFSAGAAYTTSDRTNEQVNAGGTIAGGDKADAWTAGLKYDANNIYLATMYSETRNMTPYGKTDKGYDGGVANKTQNFEVTAQYQFDFGLRPAVSFLMSKGKDLTYNNVNGDDKDLVKYADVGATYYFNKNFSTYVDYKINLLDDDDPFYKDAGISTDDIVALGMVYQF.

An N-terminal signal peptide occupies residues 1–21; that stretch reads MKRKVLALVIPALLAAGAAHA.

Belongs to the Gram-negative porin family. As to quaternary structure, homotrimer.

Its subcellular location is the cell outer membrane. Functionally, forms pores that allow passive diffusion of small molecules across the outer membrane. The polypeptide is Outer membrane protein S2 (ompS2) (Salmonella typhi).